Here is a 529-residue protein sequence, read N- to C-terminus: Listeriolysin O (529 aa).

The first 24 residues, 1–24 (MKKIMLVFITLILVSLPIAQQTEA), serve as a signal peptide directing secretion. A run of 4 beta stranded transmembrane segments spans residues 214–227 (ESQLIAKFGTAFKA), 234–243 (VNFGAISEGK), 312–321 (STKVKAAFDA), and 329–341 (SGDVELTNIIKNS). Residues 483–493 (ECTGLAWEWWR) carry the Conserved undecapeptide motif. A Cholesterol binding motif is present at residues 515–516 (TL).

Belongs to the cholesterol-dependent cytolysin family. As to quaternary structure, homooligomeric pore complex of 35 to 50 subunits; when inserted in the host membrane.

It is found in the secreted. The protein resides in the host membrane. Its subcellular location is the host cell membrane. Activity of listeriolysin O is regulated on multiple levels. It should be high in the phagosome, thereby allowing escape of the bacteria from the phagosomal compartment. Then, once inside the host cytosol, the activity must be controlled to prevent lysis of the host plasma membrane and loss of the intracellular environment. Functionally, a cholesterol-dependent toxin that causes cytolysis by forming pores in cholesterol containing host membranes. After binding to target membranes, the protein undergoes a major conformation change, leading to its insertion in the host membrane and formation of an oligomeric pore complex. Cholesterol is required for binding to host membranes, membrane insertion and pore formation; cholesterol binding is mediated by a Thr-Leu pair in the C-terminus. Acts as a major virulence factor required for the escape of bacteria from phagosomal vacuoles and entry into the host cytosol. Can be reversibly inactivated by oxidation. The sequence is that of Listeriolysin O (hly) from Listeria monocytogenes serotype 4b (strain F2365).